We begin with the raw amino-acid sequence, 206 residues long: Small ribosomal subunit protein uS4 (206 aa).

The interval 15–46 (MGENIWGRPKSPVNKREYGPGQHGQRRKNKLS) is disordered. The region spanning 94–154 (RRLDAIVYRA…EKSRQLALVL (61 aa)) is the S4 RNA-binding domain.

The protein belongs to the universal ribosomal protein uS4 family. Part of the 30S ribosomal subunit. Contacts protein S5. The interaction surface between S4 and S5 is involved in control of translational fidelity.

Its function is as follows. One of the primary rRNA binding proteins, it binds directly to 16S rRNA where it nucleates assembly of the body of the 30S subunit. With S5 and S12 plays an important role in translational accuracy. The chain is Small ribosomal subunit protein uS4 from Cereibacter sphaeroides (strain ATCC 17029 / ATH 2.4.9) (Rhodobacter sphaeroides).